We begin with the raw amino-acid sequence, 375 residues long: Actin, cytoplasmic (375 aa).

The protein belongs to the actin family.

Its subcellular location is the cytoplasm. It is found in the cytoskeleton. The catalysed reaction is ATP + H2O = ADP + phosphate + H(+). Actins are highly conserved proteins that are involved in various types of cell motility and are ubiquitously expressed in all eukaryotic cells. The chain is Actin, cytoplasmic (MIC-ACT-1) from Sterkiella nova (Ciliate).